We begin with the raw amino-acid sequence, 165 residues long: Large ribosomal subunit protein uL30 (165 aa).

This sequence belongs to the universal ribosomal protein uL30 family. As to quaternary structure, part of the 50S ribosomal subunit.

The sequence is that of Large ribosomal subunit protein uL30 from Thermoplasma volcanium (strain ATCC 51530 / DSM 4299 / JCM 9571 / NBRC 15438 / GSS1).